The following is a 130-amino-acid chain: Glutamate-rich protein 4 (130 aa).

The segment covering 91–104 (EEEEESSKEEEEDQ) has biased composition (acidic residues). Residues 91 to 130 (EEEEESSKEEEEDQEPQRKQEEEHLEACPAPHPPDFEMMI) form a disordered region. Residues 105-116 (EPQRKQEEEHLE) show a composition bias toward basic and acidic residues.

The polypeptide is Glutamate-rich protein 4 (ERICH4) (Homo sapiens (Human)).